A 556-amino-acid polypeptide reads, in one-letter code: Formate--tetrahydrofolate ligase (556 aa).

T65–T72 serves as a coordination point for ATP.

Belongs to the formate--tetrahydrofolate ligase family.

It catalyses the reaction (6S)-5,6,7,8-tetrahydrofolate + formate + ATP = (6R)-10-formyltetrahydrofolate + ADP + phosphate. Its pathway is one-carbon metabolism; tetrahydrofolate interconversion. The protein is Formate--tetrahydrofolate ligase of Agathobacter rectalis (strain ATCC 33656 / DSM 3377 / JCM 17463 / KCTC 5835 / VPI 0990) (Eubacterium rectale).